The sequence spans 223 residues: uncharacterized protein (223 aa).

The HTH tetR-type domain maps to 11 to 71 (EATFESFIDA…YLLEKRQMKK (61 aa)). The H-T-H motif DNA-binding region spans 34 to 53 (SVEDISRAAGYSKGAFYVHF).

This is an uncharacterized protein from Bacillus subtilis (strain 168).